The primary structure comprises 171 residues: Large ribosomal subunit protein bL17 (171 aa).

Residues lysine 140–arginine 152 are compositionally biased toward basic and acidic residues. The interval lysine 140 to lysine 171 is disordered. A compositionally biased stretch (polar residues) spans lysine 156–glutamate 165.

The protein belongs to the bacterial ribosomal protein bL17 family. Part of the 50S ribosomal subunit. Contacts protein L32.

This chain is Large ribosomal subunit protein bL17, found in Leptospira interrogans serogroup Icterohaemorrhagiae serovar Lai (strain 56601).